Consider the following 193-residue polypeptide: Fe/S biogenesis protein NfuA (193 aa).

Residues Cys-149 and Cys-152 each contribute to the [4Fe-4S] cluster site.

The protein belongs to the NfuA family. In terms of assembly, homodimer. [4Fe-4S] cluster is required as a cofactor.

Functionally, involved in iron-sulfur cluster biogenesis. Binds a 4Fe-4S cluster, can transfer this cluster to apoproteins, and thereby intervenes in the maturation of Fe/S proteins. Could also act as a scaffold/chaperone for damaged Fe/S proteins. The chain is Fe/S biogenesis protein NfuA from Psychromonas ingrahamii (strain DSM 17664 / CCUG 51855 / 37).